Consider the following 598-residue polypeptide: Pescadillo homolog (598 aa).

Positions 296–317 are disordered; sequence QAMKADSKDKDDNSNDEAPENV. Residues 345–439 form the BRCT domain; sequence PTATLFEDFV…ELLSANLYLP (95 aa). Disordered regions lie at residues 452–501, 515–544, and 564–598; these read DALG…EDVE, GIAY…EDEE, and MKYS…VEKK. Residues 463 to 485 show a composition bias toward acidic residues; the sequence is ESEDESSDSSEESDSEIENEEED. Basic and acidic residues-rich tracts occupy residues 520–532, 570–579, and 586–598; these read KAKD…DVAS, QKEDKIEELK, and AKKE…VEKK. The stretch at 557–598 forms a coiled coil; it reads QRKLYKKMKYSNQQKEDKIEELKKKKKQLAKKEKTLKKVEKK.

Belongs to the pescadillo family. In terms of assembly, component of the NOP7 complex, composed of ERB1, NOP7 and YTM1. The complex is held together by ERB1, which interacts with NOP7 via its N-terminal domain and with YTM1 via a high-affinity interaction between the seven-bladed beta-propeller domains of the 2 proteins. The NOP7 complex associates with the 66S pre-ribosome.

Its subcellular location is the nucleus. It is found in the nucleolus. The protein resides in the nucleoplasm. Component of the NOP7 complex, which is required for maturation of the 25S and 5.8S ribosomal RNAs and formation of the 60S ribosome. This chain is Pescadillo homolog, found in Candida glabrata (strain ATCC 2001 / BCRC 20586 / JCM 3761 / NBRC 0622 / NRRL Y-65 / CBS 138) (Yeast).